The following is a 397-amino-acid chain: NADH-quinone oxidoreductase subunit H 1 (397 aa).

Transmembrane regions (helical) follow at residues 7 to 27, 84 to 104, 120 to 140, 156 to 176, 198 to 218, 258 to 278, 279 to 299, 313 to 333, 337 to 357, and 376 to 396; these read FIFI…TTLA, PFLA…GPVI, IGVL…ALAG, SAQM…PLLI, LLSG…AAFA, MITV…APWP, AAYG…LVLL, TFPA…LPMV, LLPL…FMWI, and FLFP…AWTT.

Belongs to the complex I subunit 1 family. In terms of assembly, NDH-1 is composed of 14 different subunits. Subunits NuoA, H, J, K, L, M, N constitute the membrane sector of the complex.

It localises to the cell inner membrane. The catalysed reaction is a quinone + NADH + 5 H(+)(in) = a quinol + NAD(+) + 4 H(+)(out). Functionally, NDH-1 shuttles electrons from NADH, via FMN and iron-sulfur (Fe-S) centers, to quinones in the respiratory chain. The immediate electron acceptor for the enzyme in this species is believed to be ubiquinone. Couples the redox reaction to proton translocation (for every two electrons transferred, four hydrogen ions are translocated across the cytoplasmic membrane), and thus conserves the redox energy in a proton gradient. This subunit may bind ubiquinone. The sequence is that of NADH-quinone oxidoreductase subunit H 1 from Solibacter usitatus (strain Ellin6076).